The sequence spans 82 residues: Small ribosomal subunit protein bS16 (82 aa).

The protein belongs to the bacterial ribosomal protein bS16 family.

The protein is Small ribosomal subunit protein bS16 of Aliivibrio fischeri (strain ATCC 700601 / ES114) (Vibrio fischeri).